A 98-amino-acid polypeptide reads, in one-letter code: uncharacterized protein (98 aa).

This sequence belongs to the HesB/IscA family.

This is an uncharacterized protein from Staphylococcus saprophyticus subsp. saprophyticus (strain ATCC 15305 / DSM 20229 / NCIMB 8711 / NCTC 7292 / S-41).